A 292-amino-acid polypeptide reads, in one-letter code: MGQKVHPYSLRVKINKDWKSKWYFDKKLYSTILHEDFLIRLEIMKFLKGIKFDISDIEIIRNNPQKVTVVIVTPRPGSVIGLKGSNLEKIGQLLTKKISKKISIKIKEVKRPELDAQIIANGIAKQVENRVSYRKVLKSSLSTSMLKGAQGLKIKIAGRLGGAEIARSFEVKEGRVPLHTLRANIDYGFSEAQTTYGIIGVKVWLFKGEVLGRQTNSDAGQVINKKPFRERGESVKNFDKILNNREKANERQSRAALNKKDGLSKDETGLLNKLGSSFSKERIDSNEQNIGG.

Residues 39-110 (IRLEIMKFLK…KISIKIKEVK (72 aa)) enclose the KH type-2 domain. The interval 247–268 (KANERQSRAALNKKDGLSKDET) is disordered.

Belongs to the universal ribosomal protein uS3 family. Part of the 30S ribosomal subunit. Forms a tight complex with proteins S10 and S14.

Its function is as follows. Binds the lower part of the 30S subunit head. Binds mRNA in the 70S ribosome, positioning it for translation. The protein is Small ribosomal subunit protein uS3 of Borrelia garinii subsp. bavariensis (strain ATCC BAA-2496 / DSM 23469 / PBi) (Borreliella bavariensis).